We begin with the raw amino-acid sequence, 71 residues long: Plasticin-C2 (71 aa).

The N-terminal stretch at 1–22 is a signal peptide; the sequence is MAFLKKSLLLVLFLALVPLSIC. A propeptide spanning residues 23–45 is cleaved from the precursor; that stretch reads EEEKREEEDEEKQEDDDQSENKR. Positions 25 to 46 are disordered; the sequence is EKREEEDEEKQEDDDQSENKRG. The segment covering 26-40 has biased composition (acidic residues); it reads KREEEDEEKQEDDDQ. The residue at position 68 (asparagine 68) is an Asparagine amide. A propeptide spanning residues 70-71 is cleaved from the precursor; the sequence is ES.

The protein belongs to the frog skin active peptide (FSAP) family. Plasticin subfamily. Expressed by the skin glands.

It is found in the secreted. The protein resides in the target cell membrane. Functionally, neutral peptide with no antimicrobial activity. May act in synergy with cationic peptides by enhancing their activity. Has a moderate hemolytic activity. The protein is Plasticin-C2 of Agalychnis callidryas (Red-eyed tree frog).